A 214-amino-acid polypeptide reads, in one-letter code: Methyltransferase HEMK2 (214 aa).

Residues T29, E51, G53, D77, D103, L104, and N122 each coordinate S-adenosyl-L-homocysteine. Positions 29, 51, 53, 77, 103, 104, and 122 each coordinate S-adenosyl-L-methionine. N122 is a binding site for a protein.

It belongs to the eukaryotic/archaeal PrmC-related family. As to quaternary structure, heterodimer; heterodimerization with TRMT112 is required for S-adenosyl-L-methionine-binding. In terms of assembly, does not interact with TRMT112. In terms of processing, ubiquitinated, leading to its degradation by the proteasome. In terms of tissue distribution, widely expressed, with highest expression in parathyroid and pituitary glands, followed by adrenal gland and kidney, and lowest expression in leukocytes and mammary gland.

The protein resides in the nucleus. It carries out the reaction L-lysyl-[histone] + S-adenosyl-L-methionine = N(6)-methyl-L-lysyl-[histone] + S-adenosyl-L-homocysteine + H(+). The catalysed reaction is L-glutaminyl-[protein] + S-adenosyl-L-methionine = N(5)-methyl-L-glutaminyl-[protein] + S-adenosyl-L-homocysteine + H(+). The enzyme catalyses methylarsonous acid + S-adenosyl-L-methionine = dimethylarsinate + S-adenosyl-L-homocysteine + 2 H(+). In terms of biological role, methyltransferase that can methylate proteins and, to a lower extent, arsenic. Catalytic subunit of a heterodimer with TRMT112, which monomethylates 'Lys-12' of histone H4 (H4K12me1), a modification present at the promoters of numerous genes encoding cell cycle regulators. Catalytic subunit of a heterodimer with TRMT112, which catalyzes N5-methylation of Glu residue of proteins with a Gly-Gln-Xaa-Xaa-Xaa-Arg motif. Methylates ETF1 on 'Gln-185'; ETF1 needs to be complexed to ERF3 in its GTP-bound form to be efficiently methylated. May also play a role in the modulation of arsenic-induced toxicity by mediating the conversion of monomethylarsonous acid (3+) into the less toxic dimethylarsonic acid. It however only plays a limited role in arsenic metabolism compared with AS3MT. This Homo sapiens (Human) protein is Methyltransferase HEMK2.